Consider the following 432-residue polypeptide: Serine hydroxymethyltransferase (432 aa).

(6S)-5,6,7,8-tetrahydrofolate-binding positions include leucine 131 and 135-137; that span reads GHL. Lysine 240 is subject to N6-(pyridoxal phosphate)lysine.

It belongs to the SHMT family. In terms of assembly, homodimer. Pyridoxal 5'-phosphate is required as a cofactor.

The protein resides in the cytoplasm. The catalysed reaction is (6R)-5,10-methylene-5,6,7,8-tetrahydrofolate + glycine + H2O = (6S)-5,6,7,8-tetrahydrofolate + L-serine. It functions in the pathway one-carbon metabolism; tetrahydrofolate interconversion. Its pathway is amino-acid biosynthesis; glycine biosynthesis; glycine from L-serine: step 1/1. In terms of biological role, catalyzes the reversible interconversion of serine and glycine with tetrahydrofolate (THF) serving as the one-carbon carrier. This reaction serves as the major source of one-carbon groups required for the biosynthesis of purines, thymidylate, methionine, and other important biomolecules. Also exhibits THF-independent aldolase activity toward beta-hydroxyamino acids, producing glycine and aldehydes, via a retro-aldol mechanism. In Acidiphilium cryptum (strain JF-5), this protein is Serine hydroxymethyltransferase.